We begin with the raw amino-acid sequence, 62 residues long: Histone H1.2, embryonic (62 aa).

One can recognise an H15 domain in the interval 1 to 53 (HVVAAITALKERGGSSMKKQSVFIKKALKSGVEKGTLVQVKGKGASGSFKLGK).

The protein belongs to the histone H1/H5 family.

It is found in the nucleus. The protein resides in the chromosome. Functionally, histones H1 are necessary for the condensation of nucleosome chains into higher-order structures. This chain is Histone H1.2, embryonic, found in Parechinus angulosus (Angulate sea urchin).